The primary structure comprises 340 residues: Phosphoribosylformylglycinamidine cyclo-ligase (340 aa).

This sequence belongs to the AIR synthase family.

It localises to the cytoplasm. It catalyses the reaction 2-formamido-N(1)-(5-O-phospho-beta-D-ribosyl)acetamidine + ATP = 5-amino-1-(5-phospho-beta-D-ribosyl)imidazole + ADP + phosphate + H(+). The protein operates within purine metabolism; IMP biosynthesis via de novo pathway; 5-amino-1-(5-phospho-D-ribosyl)imidazole from N(2)-formyl-N(1)-(5-phospho-D-ribosyl)glycinamide: step 2/2. The chain is Phosphoribosylformylglycinamidine cyclo-ligase from Streptococcus pneumoniae serotype 4 (strain ATCC BAA-334 / TIGR4).